The chain runs to 345 residues: GTP cyclohydrolase-2 (345 aa).

Residues 1–27 are disordered; that stretch reads MTIDNYDNSKQDSSKYEVSGTGDGRNG. GTP is bound at residue 143-147; the sequence is RIHSE. The Zn(2+) site is built by Cys-148, Cys-159, and Cys-161. GTP-binding positions include Gln-164, 197–199, and Thr-219; that span reads EGR. Catalysis depends on Asp-231, which acts as the Proton acceptor. The active-site Nucleophile is the Arg-233. Residues Thr-254 and Lys-259 each contribute to the GTP site. The segment at 312–345 is disordered; the sequence is PLKLHTNPQPTETSEAQNQNRMNSALSSTSTLAI. The span at 317–345 shows a compositional bias: polar residues; the sequence is TNPQPTETSEAQNQNRMNSALSSTSTLAI.

It belongs to the GTP cyclohydrolase II family. Zn(2+) is required as a cofactor.

It catalyses the reaction GTP + 4 H2O = 2,5-diamino-6-hydroxy-4-(5-phosphoribosylamino)-pyrimidine + formate + 2 phosphate + 3 H(+). It functions in the pathway cofactor biosynthesis; riboflavin biosynthesis; 5-amino-6-(D-ribitylamino)uracil from GTP: step 1/4. Functionally, catalyzes the conversion of GTP to 2,5-diamino-6-ribosylamino-4(3H)-pyrimidinone 5'-phosphate (DARP), formate and pyrophosphate. This chain is GTP cyclohydrolase-2 (RIB1), found in Saccharomyces cerevisiae (strain ATCC 204508 / S288c) (Baker's yeast).